Consider the following 225-residue polypeptide: Glycerol-3-phosphate acyltransferase (225 aa).

6 consecutive transmembrane segments (helical) span residues Met-1 to Phe-21, Gly-56 to Val-76, Ile-95 to Ser-115, Val-134 to Val-154, Ile-159 to Ala-178, and Leu-182 to Ala-201.

This sequence belongs to the PlsY family. As to quaternary structure, probably interacts with PlsX.

Its subcellular location is the cell inner membrane. The catalysed reaction is an acyl phosphate + sn-glycerol 3-phosphate = a 1-acyl-sn-glycero-3-phosphate + phosphate. The protein operates within lipid metabolism; phospholipid metabolism. Catalyzes the transfer of an acyl group from acyl-phosphate (acyl-PO(4)) to glycerol-3-phosphate (G3P) to form lysophosphatidic acid (LPA). This enzyme utilizes acyl-phosphate as fatty acyl donor, but not acyl-CoA or acyl-ACP. In Acaryochloris marina (strain MBIC 11017), this protein is Glycerol-3-phosphate acyltransferase.